The following is a 517-amino-acid chain: Probable bifunctional methylthioribulose-1-phosphate dehydratase/enolase-phosphatase E1 (517 aa).

The methylthioribulose-1-phosphate dehydratase stretch occupies residues 1–242 (MACGGCSCEA…CIKLYQLGID (242 aa)). Cysteine 114 provides a ligand contact to substrate. Zn(2+) contacts are provided by histidine 132 and histidine 134. The Proton donor/acceptor; for methylthioribulose-1-phosphate dehydratase activity role is filled by glutamate 157. Histidine 207 is a binding site for Zn(2+). Positions 278–517 (VVLDIEGTTT…FRTIKSFSEI (240 aa)) are enolase-phosphatase E1. Residues aspartate 281 and glutamate 283 each coordinate Mg(2+). Substrate-binding positions include 416-417 (SS) and lysine 450. Residue aspartate 476 participates in Mg(2+) binding.

The protein in the N-terminal section; belongs to the aldolase class II family. MtnB subfamily. This sequence in the C-terminal section; belongs to the HAD-like hydrolase superfamily. MasA/MtnC family. Requires Zn(2+) as cofactor. Mg(2+) serves as cofactor.

The enzyme catalyses 5-(methylsulfanyl)-D-ribulose 1-phosphate = 5-methylsulfanyl-2,3-dioxopentyl phosphate + H2O. It carries out the reaction 5-methylsulfanyl-2,3-dioxopentyl phosphate + H2O = 1,2-dihydroxy-5-(methylsulfanyl)pent-1-en-3-one + phosphate. The protein operates within amino-acid biosynthesis; L-methionine biosynthesis via salvage pathway; L-methionine from S-methyl-5-thio-alpha-D-ribose 1-phosphate: step 2/6. It participates in amino-acid biosynthesis; L-methionine biosynthesis via salvage pathway; L-methionine from S-methyl-5-thio-alpha-D-ribose 1-phosphate: step 3/6. Its pathway is amino-acid biosynthesis; L-methionine biosynthesis via salvage pathway; L-methionine from S-methyl-5-thio-alpha-D-ribose 1-phosphate: step 4/6. This chain is Probable bifunctional methylthioribulose-1-phosphate dehydratase/enolase-phosphatase E1, found in Sorghum bicolor (Sorghum).